A 544-amino-acid chain; its full sequence is Chaperonin GroEL 2 (544 aa).

ATP-binding positions include 30–33 (TLGP), Lys51, 87–91 (DGTTT), Gly415, and Asp496.

This sequence belongs to the chaperonin (HSP60) family. Forms a cylinder of 14 subunits composed of two heptameric rings stacked back-to-back. Interacts with the co-chaperonin GroES.

It is found in the cytoplasm. It catalyses the reaction ATP + H2O + a folded polypeptide = ADP + phosphate + an unfolded polypeptide.. In terms of biological role, together with its co-chaperonin GroES, plays an essential role in assisting protein folding. The GroEL-GroES system forms a nano-cage that allows encapsulation of the non-native substrate proteins and provides a physical environment optimized to promote and accelerate protein folding. This chain is Chaperonin GroEL 2, found in Rhizobium johnstonii (strain DSM 114642 / LMG 32736 / 3841) (Rhizobium leguminosarum bv. viciae).